Here is a 463-residue protein sequence, read N- to C-terminus: Bifunctional protein GlmU (463 aa).

Positions 1-233 are pyrophosphorylase; that stretch reads MSKKSTFIIL…NFEVMGINSR (233 aa). Residues 10–13, Lys24, Gln76, 81–82, 104–106, Gly143, Glu158, Asn173, and Asn231 each bind UDP-N-acetyl-alpha-D-glucosamine; these read LAAG, GT, and YGD. Asp106 provides a ligand contact to Mg(2+). Asn231 is a Mg(2+) binding site. The segment at 234 to 254 is linker; that stretch reads YELFVAEQELKLRINKEHLSK. An N-acetyltransferase region spans residues 255 to 463; sequence GVQIIDIYST…LRRKQMYENR (209 aa). UDP-N-acetyl-alpha-D-glucosamine is bound by residues Arg336 and Lys354. His366 functions as the Proton acceptor in the catalytic mechanism. Residues Tyr369 and Asn380 each contribute to the UDP-N-acetyl-alpha-D-glucosamine site. Acetyl-CoA-binding positions include 389–390, Ala426, and Arg443; that span reads NY.

The protein in the N-terminal section; belongs to the N-acetylglucosamine-1-phosphate uridyltransferase family. In the C-terminal section; belongs to the transferase hexapeptide repeat family. Homotrimer. Requires Mg(2+) as cofactor.

Its subcellular location is the cytoplasm. It catalyses the reaction alpha-D-glucosamine 1-phosphate + acetyl-CoA = N-acetyl-alpha-D-glucosamine 1-phosphate + CoA + H(+). The enzyme catalyses N-acetyl-alpha-D-glucosamine 1-phosphate + UTP + H(+) = UDP-N-acetyl-alpha-D-glucosamine + diphosphate. Its pathway is nucleotide-sugar biosynthesis; UDP-N-acetyl-alpha-D-glucosamine biosynthesis; N-acetyl-alpha-D-glucosamine 1-phosphate from alpha-D-glucosamine 6-phosphate (route II): step 2/2. It functions in the pathway nucleotide-sugar biosynthesis; UDP-N-acetyl-alpha-D-glucosamine biosynthesis; UDP-N-acetyl-alpha-D-glucosamine from N-acetyl-alpha-D-glucosamine 1-phosphate: step 1/1. The protein operates within bacterial outer membrane biogenesis; LPS lipid A biosynthesis. Functionally, catalyzes the last two sequential reactions in the de novo biosynthetic pathway for UDP-N-acetylglucosamine (UDP-GlcNAc). The C-terminal domain catalyzes the transfer of acetyl group from acetyl coenzyme A to glucosamine-1-phosphate (GlcN-1-P) to produce N-acetylglucosamine-1-phosphate (GlcNAc-1-P), which is converted into UDP-GlcNAc by the transfer of uridine 5-monophosphate (from uridine 5-triphosphate), a reaction catalyzed by the N-terminal domain. This Caldicellulosiruptor saccharolyticus (strain ATCC 43494 / DSM 8903 / Tp8T 6331) protein is Bifunctional protein GlmU.